An 806-amino-acid chain; its full sequence is Lysine-specific demethylase JMJ15 (806 aa).

The segment at 1–43 (MEPFSAAQNKEDKDTSVEPPRRRCHRKNKGTNVEPPSSPYHPK) is disordered. A compositionally biased stretch (basic and acidic residues) spans 9–21 (NKEDKDTSVEPPR). The JmjN domain maps to 61-102 (APVFHPTSEEFEDTLAYIEKIRPLAESFGICRIVPPSNWSPP). The tract at residues 128-176 (NRGPVKKKTPKGRKRKRGKYSRTVAPKKRNGSVSKSVSTPKATEEENFG) is disordered. The segment covering 131 to 157 (PVKKKTPKGRKRKRGKYSRTVAPKKRN) has biased composition (basic residues). The Nuclear localization signal motif lies at 132-139 (VKKKTPKG). The span at 158–168 (GSVSKSVSTPK) shows a compositional bias: polar residues. The region spanning 261 to 427 (KYISSGWNLN…HGQNAVEIYS (167 aa)) is the JmjC domain. Residues His-307, Glu-309, and His-395 each coordinate Fe cation. Zn(2+) is bound by residues Cys-514, Cys-517, Cys-528, Cys-531, Cys-539, His-542, Cys-545, and Cys-547. A C5HC2 zinc finger spans residues 514 to 566 (CISCFSDLHLSATGCKNCSSLEEYGCTKHDICSCEGKDRFIFLRYTIDELSSL). Positions 629 to 687 (IMDLAAYHVEPINLGFLVVGKLWCNKHAIFPKGFKSRVKFYNVQDPMRISYYVSEIVDA) constitute an FYR N-terminal domain. An FYR C-terminal domain is found at 689-775 (LLGPLFKVTL…HGQVEYWNHK (87 aa)).

The protein belongs to the JARID1 histone demethylase family. Fe(2+) serves as cofactor. In terms of tissue distribution, expressed in roots, cotyledons, shoot apex, rosette and cauline leaves, stems, inflorescences and siliques. Expressed at low levels during vegetative growth but to higher levels in young floral organs.

It is found in the nucleus. The enzyme catalyses N(6),N(6),N(6)-trimethyl-L-lysyl(4)-[histone H3] + 2-oxoglutarate + O2 = N(6),N(6)-dimethyl-L-lysyl(4)-[histone H3] + formaldehyde + succinate + CO2. Histone demethylase that demethylates 'Lys-4' (H3K4me) of histone H3 with a specific activity for H3K4me3. No activity on H3K4me2, H3K4me1, H3K9me3/2, H3K27me3/2 and H3K36me3/2. Involved in the control of flowering time by demethylating H3K4me3 at the FLC locus and repressing its expression. The repression of FLC level and reduction in H3K4me3 at the FLC locus results in induction of the flowering activator FT, which is a downstream target of FLC. Promotes salt tolerance by down-regulating the expression of several transcriptions factors involved in stress responses via H3K4me3 and H3K4me2 demethylation. The protein is Lysine-specific demethylase JMJ15 of Arabidopsis thaliana (Mouse-ear cress).